The chain runs to 212 residues: ATP-dependent dethiobiotin synthetase BioD (212 aa).

13 to 18 (GIGKTV) lines the ATP pocket. Residue Thr-17 coordinates Mg(2+). Residue Lys-33 is part of the active site. Ser-37 lines the substrate pocket. Residue Glu-100 participates in Mg(2+) binding. ATP contacts are provided by residues 100-103 (EGAG), 160-161 (IS), and 184-186 (PLL).

Belongs to the dethiobiotin synthetase family. Homodimer. It depends on Mg(2+) as a cofactor.

It localises to the cytoplasm. The enzyme catalyses (7R,8S)-7,8-diammoniononanoate + CO2 + ATP = (4R,5S)-dethiobiotin + ADP + phosphate + 3 H(+). Its pathway is cofactor biosynthesis; biotin biosynthesis; biotin from 7,8-diaminononanoate: step 1/2. In terms of biological role, catalyzes a mechanistically unusual reaction, the ATP-dependent insertion of CO2 between the N7 and N8 nitrogen atoms of 7,8-diaminopelargonic acid (DAPA, also called 7,8-diammoniononanoate) to form a ureido ring. The polypeptide is ATP-dependent dethiobiotin synthetase BioD (Brucella abortus (strain S19)).